The chain runs to 372 residues: GDP-mannose transporter GONST3 (372 aa).

The next 10 helical transmembrane spans lie at 33 to 53 (ASVY…SIIN), 60 to 80 (FPYP…GVLL), 92 to 112 (LNLL…LSLF), 125 to 145 (TFIV…TLFL), 155 to 175 (WGSL…DYQF), 177 to 197 (IAAY…FVYI), 209 to 229 (WGLV…ELLI), 251 to 271 (VVLP…FGFS), 280 to 300 (GFTV…LMVW), and 303 to 323 (HSTF…VMYQ). The segment at 331–372 (NATQEAKPQEQDEEQEKLLEMQENKESNSVDIKETLKSEEKL) is disordered. Basic and acidic residues predominate over residues 346 to 372 (EKLLEMQENKESNSVDIKETLKSEEKL).

It belongs to the nucleotide-sugar transporter family. GDP-Mannose:GMP antiporter (GMA) (TC 2.A.7.13) subfamily. As to expression, expressed in rosette leaves, stems, flowers and siliques.

It localises to the golgi apparatus membrane. Its function is as follows. GDP-mannose transporter that may be involved in the import of GDP-mannose from the cytoplasm into the Golgi lumen. The sequence is that of GDP-mannose transporter GONST3 from Arabidopsis thaliana (Mouse-ear cress).